Here is a 379-residue protein sequence, read N- to C-terminus: Homoserine O-succinyltransferase (379 aa).

The region spanning 51–360 (NAVLICHALS…DAPQGHDAFL (310 aa)) is the AB hydrolase-1 domain. The active-site Nucleophile is serine 157. Arginine 227 is a binding site for substrate. Catalysis depends on residues aspartate 323 and histidine 356. Aspartate 357 lines the substrate pocket.

This sequence belongs to the AB hydrolase superfamily. MetX family. As to quaternary structure, homodimer.

The protein resides in the cytoplasm. It carries out the reaction L-homoserine + succinyl-CoA = O-succinyl-L-homoserine + CoA. The protein operates within amino-acid biosynthesis; L-methionine biosynthesis via de novo pathway; O-succinyl-L-homoserine from L-homoserine: step 1/1. In terms of biological role, transfers a succinyl group from succinyl-CoA to L-homoserine, forming succinyl-L-homoserine. This chain is Homoserine O-succinyltransferase, found in Pseudomonas fluorescens (strain Pf0-1).